The chain runs to 455 residues: Ribosomal protein uS12 methylthiotransferase RimO (455 aa).

An MTTase N-terminal domain is found at 30–140 (PTIGMVSLGC…VLDAVHGAVP (111 aa)). The [4Fe-4S] cluster site is built by cysteine 39, cysteine 75, cysteine 104, cysteine 171, cysteine 175, and cysteine 178. Residues 157–386 (LTPRHFSYLK…MEKAQAISEA (230 aa)) enclose the Radical SAM core domain. Residues 389-455 (AAKVGRRIEV…GEYDLWGRPV (67 aa)) enclose the TRAM domain.

Belongs to the methylthiotransferase family. RimO subfamily. Requires [4Fe-4S] cluster as cofactor.

Its subcellular location is the cytoplasm. It catalyses the reaction L-aspartate(89)-[ribosomal protein uS12]-hydrogen + (sulfur carrier)-SH + AH2 + 2 S-adenosyl-L-methionine = 3-methylsulfanyl-L-aspartate(89)-[ribosomal protein uS12]-hydrogen + (sulfur carrier)-H + 5'-deoxyadenosine + L-methionine + A + S-adenosyl-L-homocysteine + 2 H(+). Catalyzes the methylthiolation of an aspartic acid residue of ribosomal protein uS12. The protein is Ribosomal protein uS12 methylthiotransferase RimO of Cereibacter sphaeroides (strain ATCC 17029 / ATH 2.4.9) (Rhodobacter sphaeroides).